The sequence spans 37 residues: Large ribosomal subunit protein bL36 (37 aa).

It belongs to the bacterial ribosomal protein bL36 family.

In Acidithiobacillus ferrooxidans (strain ATCC 23270 / DSM 14882 / CIP 104768 / NCIMB 8455) (Ferrobacillus ferrooxidans (strain ATCC 23270)), this protein is Large ribosomal subunit protein bL36.